Here is a 147-residue protein sequence, read N- to C-terminus: 3-dehydroquinate dehydratase 2 (147 aa).

Catalysis depends on Tyr23, which acts as the Proton acceptor. Positions 74, 80, and 87 each coordinate substrate. The active-site Proton donor is His100. Residues 101–102 (IS) and Arg111 contribute to the substrate site.

Belongs to the type-II 3-dehydroquinase family. As to quaternary structure, homododecamer.

The catalysed reaction is 3-dehydroquinate = 3-dehydroshikimate + H2O. It functions in the pathway metabolic intermediate biosynthesis; chorismate biosynthesis; chorismate from D-erythrose 4-phosphate and phosphoenolpyruvate: step 3/7. Its function is as follows. Catalyzes a trans-dehydration via an enolate intermediate. This is 3-dehydroquinate dehydratase 2 (aroQ2) from Agrobacterium fabrum (strain C58 / ATCC 33970) (Agrobacterium tumefaciens (strain C58)).